The chain runs to 237 residues: Ribonuclease PH (237 aa).

Phosphate is bound by residues Arg86 and 124 to 126 (GTR).

This sequence belongs to the RNase PH family. Homohexameric ring arranged as a trimer of dimers.

The catalysed reaction is tRNA(n+1) + phosphate = tRNA(n) + a ribonucleoside 5'-diphosphate. Functionally, phosphorolytic 3'-5' exoribonuclease that plays an important role in tRNA 3'-end maturation. Removes nucleotide residues following the 3'-CCA terminus of tRNAs; can also add nucleotides to the ends of RNA molecules by using nucleoside diphosphates as substrates, but this may not be physiologically important. Probably plays a role in initiation of 16S rRNA degradation (leading to ribosome degradation) during starvation. This Nitrobacter winogradskyi (strain ATCC 25391 / DSM 10237 / CIP 104748 / NCIMB 11846 / Nb-255) protein is Ribonuclease PH.